We begin with the raw amino-acid sequence, 98 residues long: Integration host factor subunit beta (98 aa).

Positions 59–98 are disordered; the sequence is RTGRNPKTGESVTLPGKYVPHFKPGKEMRDRVNESIQSEG. Positions 82–91 are enriched in basic and acidic residues; sequence PGKEMRDRVN.

Belongs to the bacterial histone-like protein family. As to quaternary structure, heterodimer of an alpha and a beta chain.

This protein is one of the two subunits of integration host factor, a specific DNA-binding protein that functions in genetic recombination as well as in transcriptional and translational control. The sequence is that of Integration host factor subunit beta from Saccharophagus degradans (strain 2-40 / ATCC 43961 / DSM 17024).